The following is a 122-amino-acid chain: Large ribosomal subunit protein uL18 (122 aa).

Belongs to the universal ribosomal protein uL18 family. As to quaternary structure, part of the 50S ribosomal subunit; part of the 5S rRNA/L5/L18/L25 subcomplex. Contacts the 5S and 23S rRNAs.

Its function is as follows. This is one of the proteins that bind and probably mediate the attachment of the 5S RNA into the large ribosomal subunit, where it forms part of the central protuberance. In Desulforamulus reducens (strain ATCC BAA-1160 / DSM 100696 / MI-1) (Desulfotomaculum reducens), this protein is Large ribosomal subunit protein uL18.